The following is a 136-amino-acid chain: Translation initiation factor 5A (136 aa).

A Hypusine modification is found at Lys37.

Belongs to the eIF-5A family.

The protein localises to the cytoplasm. In terms of biological role, functions by promoting the formation of the first peptide bond. This is Translation initiation factor 5A (eIF5A) from Thermococcus onnurineus (strain NA1).